Reading from the N-terminus, the 289-residue chain is Rhodopsin (289 aa).

At 1–7 (YLVSPAA) the chain is on the extracellular side. A helical membrane pass occupies residues 8–32 (YAALGAYMFLLILIGFPVNFLTLYV). Topologically, residues 33–44 (TLEHKKLRTPLN) are cytoplasmic. A helical membrane pass occupies residues 45–67 (YILLNLAVADLFMVLGGFTTTMY). Over 68–81 (TSMHGYFVLGRLGC) the chain is Extracellular. An intrachain disulfide couples C81 to C158. A helical membrane pass occupies residues 82–104 (NLEGFFATLGGEIALWSLVVLAI). Residues 105–107 (ERW) carry the 'Ionic lock' involved in activated form stabilization motif. Residues 105 to 123 (ERWIVVCKPISKFRFTEDN) are Cytoplasmic-facing. Residues 124–144 (AIMGLAFSWVMALACAVPPLV) form a helical membrane-spanning segment. At 145–173 (GWLRYIPEGMQCTCGVDYYTRAEGFDNES) the chain is on the extracellular side. A glycan (N-linked (GlcNAc...) asparagine) is linked at N171. The chain crosses the membrane as a helical span at residues 174–195 (FVIYMFIVHFLIPLSVIFFCYG). At 196–223 (RLLCAVKEAAAAQQESETTQRAEKEVSR) the chain is on the cytoplasmic side. Residues 224–245 (MVVIMVIGFLVCWLPYASVAWW) form a helical membrane-spanning segment. At 246–257 (IFCNQGSDFGPI) the chain is on the extracellular side. A helical transmembrane segment spans residues 258 to 279 (FMTLPSFFAKRPAIYNPMIYIC). K267 is modified (N6-(retinylidene)lysine). Over 280 to 289 (MNKQFRHCMI) the chain is Cytoplasmic.

The protein belongs to the G-protein coupled receptor 1 family. Opsin subfamily. Post-translationally, phosphorylated on some or all of the serine and threonine residues present in the C-terminal region. Contains one covalently linked retinal chromophore.

It localises to the membrane. The protein localises to the cell projection. It is found in the cilium. Its subcellular location is the photoreceptor outer segment. Its function is as follows. Photoreceptor required for image-forming vision at low light intensity. While most salt water fish species use retinal as chromophore, most freshwater fish use 3-dehydroretinal, or a mixture of retinal and 3-dehydroretinal. Light-induced isomerization of 11-cis to all-trans retinal triggers a conformational change that activates signaling via G-proteins. Subsequent receptor phosphorylation mediates displacement of the bound G-protein alpha subunit by arrestin and terminates signaling. The sequence is that of Rhodopsin (rho) from Batrachocottus nikolskii (Fat sculpin).